Consider the following 199-residue polypeptide: 3-isopropylmalate dehydratase small subunit (199 aa).

This sequence belongs to the LeuD family. LeuD type 1 subfamily. As to quaternary structure, heterodimer of LeuC and LeuD.

The enzyme catalyses (2R,3S)-3-isopropylmalate = (2S)-2-isopropylmalate. Its pathway is amino-acid biosynthesis; L-leucine biosynthesis; L-leucine from 3-methyl-2-oxobutanoate: step 2/4. Its function is as follows. Catalyzes the isomerization between 2-isopropylmalate and 3-isopropylmalate, via the formation of 2-isopropylmaleate. This chain is 3-isopropylmalate dehydratase small subunit, found in Bacillus pumilus (strain SAFR-032).